Reading from the N-terminus, the 784-residue chain is ATP-dependent 6-phosphofructokinase, platelet type (784 aa).

M1 is subject to N-acetylmethionine. Residues 1 to 399 (MDADDSRAPK…NLNTYKRLAI (399 aa)) are N-terminal catalytic PFK domain 1. Residues S6, S12, and S21 each carry the phosphoserine modification. ATP is bound by residues G34, 97-98 (RC), and 127-130 (GDGS). D128 serves as a coordination point for Mg(2+). Phosphoserine is present on S142. Substrate-binding positions include 173-175 (SID), R210, 217-219 (MGR), E273, R301, and 307-310 (HVQR). Residue D175 is the Proton acceptor of the active site. S386 is subject to Phosphoserine. The residue at position 395 (K395) is an N6-acetyllysine. Positions 400-411 (KLPDDQIPKTNC) are interdomain linker. The C-terminal regulatory PFK domain 2 stretch occupies residues 412–784 (NVAVINVGAP…QLEHVQPWSV (373 aa)). R481 is a beta-D-fructose 2,6-bisphosphate binding site. K486 carries the post-translational modification N6-acetyllysine. Beta-D-fructose 2,6-bisphosphate-binding positions include 538 to 542 (TVSNN), R576, 583 to 585 (MGG), and E639. S540 carries O-linked (GlcNAc) serine glycosylation. Y651 bears the Phosphotyrosine mark. Residues R665 and 671–674 (HMQQ) each bind beta-D-fructose 2,6-bisphosphate. At K688 the chain carries N6-acetyllysine. Residue R744 participates in beta-D-fructose 2,6-bisphosphate binding. Residue S783 is modified to Phosphoserine.

Belongs to the phosphofructokinase type A (PFKA) family. ATP-dependent PFK group I subfamily. Eukaryotic two domain clade 'E' sub-subfamily. Homo- and heterotetramers. Phosphofructokinase (PFK) enzyme functions as a tetramer composed of different combinations of 3 types of subunits, called PFKM (where M stands for Muscle), PFKL (Liver) and PFKP (Platelet). The composition of the PFK tetramer differs according to the tissue type it is present in. In muscles, it is composed of 4 PFKM subunits (also called M4). In the liver, the predominant form is a tetramer of PFKL subunits (L4). In erythrocytes, both PFKM and PFKL subunits randomly tetramerize to form M4, L4 and other combinations (ML3, M2L2, M3L). In platelets, brain and fibroblasts, PFK contains a higher proportion of PFKP subunits. The kinetic and regulatory properties of the tetrameric enzyme are dependent on the subunit composition, hence can vary across tissues. Interacts with ATG4B; promoting phosphorylation of ATG4B. Mg(2+) is required as a cofactor. In terms of processing, phosphorylation at Ser-386 promotes interaction with ATG4B. GlcNAcylation decreases enzyme activity.

The protein localises to the cytoplasm. It carries out the reaction beta-D-fructose 6-phosphate + ATP = beta-D-fructose 1,6-bisphosphate + ADP + H(+). It participates in carbohydrate degradation; glycolysis; D-glyceraldehyde 3-phosphate and glycerone phosphate from D-glucose: step 3/4. Allosterically activated by ADP, AMP, or fructose 2,6-bisphosphate, and allosterically inhibited by ATP or citrate. Functionally, catalyzes the phosphorylation of D-fructose 6-phosphate to fructose 1,6-bisphosphate by ATP, the first committing step of glycolysis. This chain is ATP-dependent 6-phosphofructokinase, platelet type (PFKP), found in Homo sapiens (Human).